The chain runs to 219 residues: Probable GTP-binding protein EngB (219 aa).

In terms of domain architecture, EngB-type G spans 24-207; the sequence is VQPEIAFAGR…HELIESWVRP (184 aa). GTP is bound by residues 32-39, 59-63, 81-84, 148-151, and 186-188; these read GRSNAGKS, GRTQH, DLPG, TKCD, and FSA. Mg(2+) is bound by residues S39 and T61.

This sequence belongs to the TRAFAC class TrmE-Era-EngA-EngB-Septin-like GTPase superfamily. EngB GTPase family. Requires Mg(2+) as cofactor.

Necessary for normal cell division and for the maintenance of normal septation. The chain is Probable GTP-binding protein EngB from Burkholderia ambifaria (strain MC40-6).